Here is a 77-residue protein sequence, read N- to C-terminus: Translation initiation factor IF-1, chloroplastic (77 aa).

Positions 1-71 constitute an S1-like domain; that stretch reads MKEQKWIHEG…TRGRIIYRLR (71 aa).

Belongs to the IF-1 family. In terms of assembly, component of the 30S ribosomal translation pre-initiation complex which assembles on the 30S ribosome in the order IF-2 and IF-3, IF-1 and N-formylmethionyl-tRNA(fMet); mRNA recruitment can occur at any time during PIC assembly.

The protein resides in the plastid. It localises to the chloroplast. Its function is as follows. One of the essential components for the initiation of protein synthesis. Stabilizes the binding of IF-2 and IF-3 on the 30S subunit to which N-formylmethionyl-tRNA(fMet) subsequently binds. Helps modulate mRNA selection, yielding the 30S pre-initiation complex (PIC). Upon addition of the 50S ribosomal subunit IF-1, IF-2 and IF-3 are released leaving the mature 70S translation initiation complex. The sequence is that of Translation initiation factor IF-1, chloroplastic from Garrya elliptica (Wavyleaf silktassel).